The following is a 1107-amino-acid chain: DNA-directed RNA polymerase subunit beta (1107 aa).

Basic and acidic residues predominate over residues 1062 to 1075 (DNEGNEKEKARELG). A disordered region spans residues 1062-1081 (DNEGNEKEKARELGLDLPDN).

Belongs to the RNA polymerase beta chain family. As to quaternary structure, the RNAP catalytic core consists of 2 alpha, 1 beta, 1 beta' and 1 omega subunit. When a sigma factor is associated with the core the holoenzyme is formed, which can initiate transcription.

The enzyme catalyses RNA(n) + a ribonucleoside 5'-triphosphate = RNA(n+1) + diphosphate. Its function is as follows. DNA-dependent RNA polymerase catalyzes the transcription of DNA into RNA using the four ribonucleoside triphosphates as substrates. This Syntrophomonas wolfei subsp. wolfei (strain DSM 2245B / Goettingen) protein is DNA-directed RNA polymerase subunit beta.